Consider the following 298-residue polypeptide: Putative glycylpeptide N-tetradecanoyltransferase (298 aa).

It belongs to the NMT family.

The enzyme catalyses N-terminal glycyl-[protein] + tetradecanoyl-CoA = N-tetradecanoylglycyl-[protein] + CoA + H(+). Its function is as follows. Adds a myristoyl group to the N-terminal glycine residue of certain proteins. In Melanoplus sanguinipes (Migratory grasshopper), this protein is Putative glycylpeptide N-tetradecanoyltransferase.